The following is a 100-amino-acid chain: Small ribosomal subunit protein uS14c (100 aa).

It belongs to the universal ribosomal protein uS14 family. As to quaternary structure, part of the 30S ribosomal subunit.

It is found in the plastid. The protein localises to the chloroplast. Its function is as follows. Binds 16S rRNA, required for the assembly of 30S particles. This chain is Small ribosomal subunit protein uS14c, found in Bigelowiella natans (Pedinomonas minutissima).